A 312-amino-acid chain; its full sequence is Ribosomal protein L11 methyltransferase (312 aa).

S-adenosyl-L-methionine-binding residues include threonine 160, glycine 181, aspartate 203, and asparagine 246.

The protein belongs to the methyltransferase superfamily. PrmA family.

It localises to the cytoplasm. It carries out the reaction L-lysyl-[protein] + 3 S-adenosyl-L-methionine = N(6),N(6),N(6)-trimethyl-L-lysyl-[protein] + 3 S-adenosyl-L-homocysteine + 3 H(+). In terms of biological role, methylates ribosomal protein L11. This chain is Ribosomal protein L11 methyltransferase, found in Staphylococcus epidermidis (strain ATCC 12228 / FDA PCI 1200).